A 166-amino-acid polypeptide reads, in one-letter code: MADEATRKAVSEIPLLKTNSGPRDKELWVQRLREEYLALIKYVENNKAADNDWFRLESNKEGTRWFGKCWYIHELLKYEFDMEFDIPVTYPATAPEVAIPELDGKTAKMYRGGKICLTDHFKPLWARNVPKFGLAHLMALGLGPWLAVEIPDLIAKGLIQHKDQNS.

C116 functions as the Glycyl thioester intermediate in the catalytic mechanism.

Belongs to the ubiquitin-conjugating enzyme family. UFC1 subfamily. As to quaternary structure, interacts with UBA5 (via C-terminus). Interacts with UFL1. Interacts with UFM1.

Functionally, E2-like enzyme which specifically catalyzes the second step in ufmylation. Accepts the ubiquitin-like modifier UFM1 from the E1 enzyme UBA5 and forms an intermediate with UFM1 via a thioester linkage. Ufmylation is involved in various processes, such as ribosome recycling, response to DNA damage, interferon response or reticulophagy (also called ER-phagy). This chain is Ubiquitin-fold modifier-conjugating enzyme 1 (ufc1), found in Danio rerio (Zebrafish).